Reading from the N-terminus, the 205-residue chain is Thiamine-phosphate synthase (205 aa).

Residues 35-39 (QYRDK) and Asn-67 each bind 4-amino-2-methyl-5-(diphosphooxymethyl)pyrimidine. Mg(2+)-binding residues include Asp-68 and Asp-86. Position 105 (Thr-105) interacts with 4-amino-2-methyl-5-(diphosphooxymethyl)pyrimidine. Residue 132–134 (SQT) coordinates 2-[(2R,5Z)-2-carboxy-4-methylthiazol-5(2H)-ylidene]ethyl phosphate. Residue Lys-135 participates in 4-amino-2-methyl-5-(diphosphooxymethyl)pyrimidine binding. Gly-162 is a 2-[(2R,5Z)-2-carboxy-4-methylthiazol-5(2H)-ylidene]ethyl phosphate binding site.

Belongs to the thiamine-phosphate synthase family. It depends on Mg(2+) as a cofactor.

It carries out the reaction 2-[(2R,5Z)-2-carboxy-4-methylthiazol-5(2H)-ylidene]ethyl phosphate + 4-amino-2-methyl-5-(diphosphooxymethyl)pyrimidine + 2 H(+) = thiamine phosphate + CO2 + diphosphate. The catalysed reaction is 2-(2-carboxy-4-methylthiazol-5-yl)ethyl phosphate + 4-amino-2-methyl-5-(diphosphooxymethyl)pyrimidine + 2 H(+) = thiamine phosphate + CO2 + diphosphate. The enzyme catalyses 4-methyl-5-(2-phosphooxyethyl)-thiazole + 4-amino-2-methyl-5-(diphosphooxymethyl)pyrimidine + H(+) = thiamine phosphate + diphosphate. It participates in cofactor biosynthesis; thiamine diphosphate biosynthesis; thiamine phosphate from 4-amino-2-methyl-5-diphosphomethylpyrimidine and 4-methyl-5-(2-phosphoethyl)-thiazole: step 1/1. Its function is as follows. Condenses 4-methyl-5-(beta-hydroxyethyl)thiazole monophosphate (THZ-P) and 2-methyl-4-amino-5-hydroxymethyl pyrimidine pyrophosphate (HMP-PP) to form thiamine monophosphate (TMP). This chain is Thiamine-phosphate synthase, found in Pseudomonas syringae pv. tomato (strain ATCC BAA-871 / DC3000).